The sequence spans 116 residues: MLPNQNRLRRREDFAKVYAKGDRYRGTYLSLKILFDSNTTYTRIGIVVSKKVSKLAVTRNRFKRQLRAIFRQLLSQLKDGLQIVVTVTTVASKPNYQELGDDLKNILAKAKVLHGN.

The protein belongs to the RnpA family. Consists of a catalytic RNA component (M1 or rnpB) and a protein subunit.

The catalysed reaction is Endonucleolytic cleavage of RNA, removing 5'-extranucleotides from tRNA precursor.. RNaseP catalyzes the removal of the 5'-leader sequence from pre-tRNA to produce the mature 5'-terminus. It can also cleave other RNA substrates such as 4.5S RNA. The protein component plays an auxiliary but essential role in vivo by binding to the 5'-leader sequence and broadening the substrate specificity of the ribozyme. The protein is Ribonuclease P protein component of Pseudanabaena sp. (strain PCC 6903).